We begin with the raw amino-acid sequence, 174 residues long: Imidazole glycerol phosphate synthase subunit HisH (174 aa).

Residues 2–174 (SVVIINTGCA…AAVNKDNFWR (173 aa)) enclose the Glutamine amidotransferase type-1 domain. The active-site Nucleophile is the C77.

As to quaternary structure, heterodimer of HisH and HisF.

The protein resides in the cytoplasm. The catalysed reaction is 5-[(5-phospho-1-deoxy-D-ribulos-1-ylimino)methylamino]-1-(5-phospho-beta-D-ribosyl)imidazole-4-carboxamide + L-glutamine = D-erythro-1-(imidazol-4-yl)glycerol 3-phosphate + 5-amino-1-(5-phospho-beta-D-ribosyl)imidazole-4-carboxamide + L-glutamate + H(+). It carries out the reaction L-glutamine + H2O = L-glutamate + NH4(+). Its pathway is amino-acid biosynthesis; L-histidine biosynthesis; L-histidine from 5-phospho-alpha-D-ribose 1-diphosphate: step 5/9. IGPS catalyzes the conversion of PRFAR and glutamine to IGP, AICAR and glutamate. The HisH subunit catalyzes the hydrolysis of glutamine to glutamate and ammonia as part of the synthesis of IGP and AICAR. The resulting ammonia molecule is channeled to the active site of HisF. The polypeptide is Imidazole glycerol phosphate synthase subunit HisH (hisH) (Buchnera aphidicola subsp. Schlechtendalia chinensis).